The chain runs to 336 residues: Alcohol dehydrogenase (336 aa).

C37, H58, C89, C92, C95, C103, and C145 together coordinate Zn(2+).

It belongs to the zinc-containing alcohol dehydrogenase family. It depends on Zn(2+) as a cofactor.

The catalysed reaction is a primary alcohol + NAD(+) = an aldehyde + NADH + H(+). It catalyses the reaction a secondary alcohol + NAD(+) = a ketone + NADH + H(+). The chain is Alcohol dehydrogenase (adh) from Staphylococcus aureus (strain USA300).